The primary structure comprises 349 residues: NADH-quinone oxidoreductase subunit H (349 aa).

The next 8 helical transmembrane spans lie at 11 to 31 (FPLL…LLLV), 83 to 103 (GVFL…WAVI), 116 to 136 (VGLL…IMGG), 162 to 182 (IGFV…TTIV), 200 to 220 (FLDW…ISAL), 252 to 272 (LFFL…TILF), 288 to 308 (VPGI…FAMV), and 323 to 343 (LGWK…AAFL).

Belongs to the complex I subunit 1 family. In terms of assembly, NDH-1 is composed of 14 different subunits. Subunits NuoA, H, J, K, L, M, N constitute the membrane sector of the complex.

The protein resides in the cell inner membrane. The catalysed reaction is a quinone + NADH + 5 H(+)(in) = a quinol + NAD(+) + 4 H(+)(out). Functionally, NDH-1 shuttles electrons from NADH, via FMN and iron-sulfur (Fe-S) centers, to quinones in the respiratory chain. The immediate electron acceptor for the enzyme in this species is believed to be ubiquinone. Couples the redox reaction to proton translocation (for every two electrons transferred, four hydrogen ions are translocated across the cytoplasmic membrane), and thus conserves the redox energy in a proton gradient. This subunit may bind ubiquinone. This Bartonella henselae (strain ATCC 49882 / DSM 28221 / CCUG 30454 / Houston 1) (Rochalimaea henselae) protein is NADH-quinone oxidoreductase subunit H.